Consider the following 285-residue polypeptide: Acetyl-coenzyme A carboxylase carboxyl transferase subunit beta (285 aa).

The region spanning 24-285 (GLWYKSPTGK…DLIQNQPVRA (262 aa)) is the CoA carboxyltransferase N-terminal domain.

It belongs to the AccD/PCCB family. In terms of assembly, acetyl-CoA carboxylase is a heterohexamer composed of biotin carboxyl carrier protein (AccB), biotin carboxylase (AccC) and two subunits each of ACCase subunit alpha (AccA) and ACCase subunit beta (AccD).

The protein resides in the cytoplasm. It catalyses the reaction N(6)-carboxybiotinyl-L-lysyl-[protein] + acetyl-CoA = N(6)-biotinyl-L-lysyl-[protein] + malonyl-CoA. Its pathway is lipid metabolism; malonyl-CoA biosynthesis; malonyl-CoA from acetyl-CoA: step 1/1. Its function is as follows. Component of the acetyl coenzyme A carboxylase (ACC) complex. Biotin carboxylase (BC) catalyzes the carboxylation of biotin on its carrier protein (BCCP) and then the CO(2) group is transferred by the transcarboxylase to acetyl-CoA to form malonyl-CoA. The protein is Acetyl-coenzyme A carboxylase carboxyl transferase subunit beta of Christiangramia forsetii (strain DSM 17595 / CGMCC 1.15422 / KT0803) (Gramella forsetii).